The chain runs to 225 residues: NAD(P)H-quinone oxidoreductase subunit K, chloroplastic (225 aa).

[4Fe-4S] cluster is bound by residues Cys-43, Cys-44, Cys-108, and Cys-139.

Belongs to the complex I 20 kDa subunit family. As to quaternary structure, NDH is composed of at least 16 different subunits, 5 of which are encoded in the nucleus. [4Fe-4S] cluster is required as a cofactor.

The protein resides in the plastid. Its subcellular location is the chloroplast thylakoid membrane. It catalyses the reaction a plastoquinone + NADH + (n+1) H(+)(in) = a plastoquinol + NAD(+) + n H(+)(out). It carries out the reaction a plastoquinone + NADPH + (n+1) H(+)(in) = a plastoquinol + NADP(+) + n H(+)(out). NDH shuttles electrons from NAD(P)H:plastoquinone, via FMN and iron-sulfur (Fe-S) centers, to quinones in the photosynthetic chain and possibly in a chloroplast respiratory chain. The immediate electron acceptor for the enzyme in this species is believed to be plastoquinone. Couples the redox reaction to proton translocation, and thus conserves the redox energy in a proton gradient. The polypeptide is NAD(P)H-quinone oxidoreductase subunit K, chloroplastic (Atropa belladonna (Belladonna)).